A 145-amino-acid chain; its full sequence is Large ribosomal subunit protein bL35c (145 aa).

Residues 1–56 constitute a chloroplast transit peptide; it reads MASLSMASVNVSFCHPLRSSSPKVSLRSSVHFATSLSSSHSISGLRAVLPLKISTV.

Belongs to the bacterial ribosomal protein bL35 family. Part of the 50S ribosomal subunit.

It localises to the plastid. The protein localises to the chloroplast. In Arabidopsis thaliana (Mouse-ear cress), this protein is Large ribosomal subunit protein bL35c.